Here is a 418-residue protein sequence, read N- to C-terminus: 3-isopropylmalate dehydratase large subunit (418 aa).

The [4Fe-4S] cluster site is built by Cys297, Cys357, and Cys360.

Belongs to the aconitase/IPM isomerase family. LeuC type 2 subfamily. Heterodimer of LeuC and LeuD. [4Fe-4S] cluster serves as cofactor.

It catalyses the reaction (2R,3S)-3-isopropylmalate = (2S)-2-isopropylmalate. It functions in the pathway amino-acid biosynthesis; L-leucine biosynthesis; L-leucine from 3-methyl-2-oxobutanoate: step 2/4. Its function is as follows. Catalyzes the isomerization between 2-isopropylmalate and 3-isopropylmalate, via the formation of 2-isopropylmaleate. The protein is 3-isopropylmalate dehydratase large subunit of Elusimicrobium minutum (strain Pei191).